We begin with the raw amino-acid sequence, 72 residues long: Translation initiation factor IF-1 (72 aa).

An S1-like domain is found at 1 to 72; it reads MAKEELLEFP…TKGRITYRFK (72 aa).

It belongs to the IF-1 family. As to quaternary structure, component of the 30S ribosomal translation pre-initiation complex which assembles on the 30S ribosome in the order IF-2 and IF-3, IF-1 and N-formylmethionyl-tRNA(fMet); mRNA recruitment can occur at any time during PIC assembly.

The protein localises to the cytoplasm. Functionally, one of the essential components for the initiation of protein synthesis. Stabilizes the binding of IF-2 and IF-3 on the 30S subunit to which N-formylmethionyl-tRNA(fMet) subsequently binds. Helps modulate mRNA selection, yielding the 30S pre-initiation complex (PIC). Upon addition of the 50S ribosomal subunit IF-1, IF-2 and IF-3 are released leaving the mature 70S translation initiation complex. The chain is Translation initiation factor IF-1 from Maricaulis maris (strain MCS10) (Caulobacter maris).